The sequence spans 590 residues: Putative histone-lysine N-methyltransferase PRDM6 (590 aa).

The tract at residues 25 to 87 is disordered; that stretch reads QLFPHGGGGP…STPASSSTSA (63 aa). Residues 29-42 show a composition bias toward gly residues; the sequence is HGGGGPLKGGGAAG. Residues 71-87 show a composition bias toward low complexity; it reads ASLSSASSTPASSSTSA. In terms of domain architecture, SET spans 241–360; sequence REVCLCTSTV…RGTELLVWYN (120 aa). The segment at 468-490 adopts a C2H2-type 1; degenerate zinc-finger fold; sequence WKCGQCFKTFTQRILLQMHVCTQ. 2 C2H2-type zinc fingers span residues 496 to 518 and 524 to 546; these read YQCG…VVTH and FKCG…IRTH. The C2H2-type 4; degenerate zinc-finger motif lies at 552–574; sequence FKCERCERSFTQATQLSRHQRMP.

This sequence belongs to the class V-like SAM-binding methyltransferase superfamily. In terms of assembly, interacts with HDAC1, HDAC2, HDAC3, CBX1 and EP300.

It localises to the nucleus. It catalyses the reaction L-lysyl(20)-[histone H4] + S-adenosyl-L-methionine = N(6)-methyl-L-lysyl(20)-[histone H4] + S-adenosyl-L-homocysteine + H(+). Its function is as follows. Putative histone methyltransferase that acts as a transcriptional repressor of smooth muscle gene expression. Promotes the transition from differentiated to proliferative smooth muscle by suppressing differentiation and maintaining the proliferative potential of vascular smooth muscle cells. Also plays a role in endothelial cells by inhibiting endothelial cell proliferation, survival and differentiation. It is unclear whether it has histone methyltransferase activity in vivo. According to some authors, it does not act as a histone methyltransferase by itself and represses transcription by recruiting EHMT2/G9a. According to others, it possesses histone methyltransferase activity when associated with other proteins and specifically methylates 'Lys-20' of histone H4 in vitro. 'Lys-20' methylation represents a specific tag for epigenetic transcriptional repression. The sequence is that of Putative histone-lysine N-methyltransferase PRDM6 (PRDM6) from Bos taurus (Bovine).